We begin with the raw amino-acid sequence, 307 residues long: UDP-3-O-acyl-N-acetylglucosamine deacetylase (307 aa).

Residues His78, His241, and Asp245 each coordinate Zn(2+). The active-site Proton donor is the His268.

It belongs to the LpxC family. Zn(2+) serves as cofactor.

It catalyses the reaction a UDP-3-O-[(3R)-3-hydroxyacyl]-N-acetyl-alpha-D-glucosamine + H2O = a UDP-3-O-[(3R)-3-hydroxyacyl]-alpha-D-glucosamine + acetate. It participates in glycolipid biosynthesis; lipid IV(A) biosynthesis; lipid IV(A) from (3R)-3-hydroxytetradecanoyl-[acyl-carrier-protein] and UDP-N-acetyl-alpha-D-glucosamine: step 2/6. Catalyzes the hydrolysis of UDP-3-O-myristoyl-N-acetylglucosamine to form UDP-3-O-myristoylglucosamine and acetate, the committed step in lipid A biosynthesis. The chain is UDP-3-O-acyl-N-acetylglucosamine deacetylase from Verminephrobacter eiseniae (strain EF01-2).